The sequence spans 329 residues: Probable ABC transporter permease protein MG188 homolog (329 aa).

Transmembrane regions (helical) follow at residues 30-50, 96-116, 128-148, 176-196, 234-254, and 283-303; these read FLLF…PFFL, IISL…IVFV, VFFL…IYIL, ALWG…VLVI, LIFL…ISLF, and NFAG…GLVL. Positions 88-303 constitute an ABC transmembrane type-1 domain; it reads LRNSFLYSII…ILGVCYGLVL (216 aa).

It belongs to the binding-protein-dependent transport system permease family. MalFG subfamily.

The protein localises to the cell membrane. Functionally, probably part of a binding-protein-dependent transport system. Probably responsible for the translocation of the substrate across the membrane. The sequence is that of Probable ABC transporter permease protein MG188 homolog from Mycoplasma pneumoniae (strain ATCC 29342 / M129 / Subtype 1) (Mycoplasmoides pneumoniae).